Here is a 373-residue protein sequence, read N- to C-terminus: Flagellar P-ring protein (373 aa).

A signal peptide spans 1-28; the sequence is MPSVSAVILKLAAAALSALLLSGVAANA.

It belongs to the FlgI family. As to quaternary structure, the basal body constitutes a major portion of the flagellar organelle and consists of four rings (L,P,S, and M) mounted on a central rod.

The protein localises to the periplasm. It localises to the bacterial flagellum basal body. Its function is as follows. Assembles around the rod to form the L-ring and probably protects the motor/basal body from shearing forces during rotation. The chain is Flagellar P-ring protein from Rhodopseudomonas palustris (strain HaA2).